A 534-amino-acid polypeptide reads, in one-letter code: Probable RNA-binding protein 46 (534 aa).

3 RRM domains span residues 61 to 139 (CEVF…VSLD), 141 to 223 (CRLF…WASP), and 236 to 308 (KVLY…LAKP).

The protein localises to the cytoplasm. Essential for male and female fertility, playing a crucial role in regulating germ cell development by ensuring the proper progression of meiosis prophase I. This chain is Probable RNA-binding protein 46 (rbm46), found in Xenopus tropicalis (Western clawed frog).